We begin with the raw amino-acid sequence, 304 residues long: Sulfotransferase 1C3 (304 aa).

Residue 56–61 participates in 3'-phosphoadenylyl sulfate binding; it reads KSGTTW. Residue 115 to 117 coordinates substrate; that stretch reads KTH. H117 (proton acceptor) is an active-site residue. 3'-phosphoadenylyl sulfate is bound by residues R139, S147, Y202, 236–241, and 264–268; these read TSFDVM and FMRKG.

This sequence belongs to the sulfotransferase 1 family. As to expression, not detectable in any of the tissues tested. In terms of tissue distribution, expressed in the small intestine.

The protein localises to the cytoplasm. It catalyses the reaction an alcohol + 3'-phosphoadenylyl sulfate = an alkyl sulfate + adenosine 3',5'-bisphosphate + H(+). The enzyme catalyses a phenol + 3'-phosphoadenylyl sulfate = an aryl sulfate + adenosine 3',5'-bisphosphate + H(+). It carries out the reaction lithocholate + 3'-phosphoadenylyl sulfate = lithocholate sulfate + adenosine 3',5'-bisphosphate + H(+). In terms of biological role, sulfotransferase that utilizes 3'-phospho-5'-adenylyl sulfate (PAPS) as sulfonate donor. Has sulfotransferase activity towards various substrates, such as bile acids, thyroid hormones and toward xenobiotic compounds such as chloro phenols and hydroxypyrenes. Lithocholic acid appears to be the best substrate among the endogenous compounds tested and 3,3',5,5'-tetrachloro-4,4'-biphenyldiol shows the highest specific activity among the xenobiotic compounds. Its function is as follows. Exhibits weak sulphating activity and only toward chloro phenols (pentachlorophenol and 3,3',5,5'-tetrachloro-4,4'-biphenyldiol). The protein is Sulfotransferase 1C3 (SULT1C3) of Homo sapiens (Human).